Consider the following 138-residue polypeptide: Lutropin subunit beta (138 aa).

The first 19 residues, 1–19 (RYQELTVLLLLLLEGGSWG), serve as a signal peptide directing secretion. Disulfide bonds link cysteine 27-cysteine 75, cysteine 41-cysteine 90, cysteine 44-cysteine 128, cysteine 52-cysteine 106, cysteine 56-cysteine 108, and cysteine 111-cysteine 118. Residue asparagine 31 is glycosylated (N-linked (GlcNAc...) asparagine).

Belongs to the glycoprotein hormones subunit beta family. In terms of assembly, heterodimer of a common alpha chain and a unique beta chain which confers biological specificity to thyrotropin, lutropin, follitropin and gonadotropin.

It is found in the secreted. Its function is as follows. Promotes spermatogenesis and ovulation by stimulating the testes and ovaries to synthesize steroids. This chain is Lutropin subunit beta (LHB), found in Osphranter rufus (Red kangaroo).